The sequence spans 602 residues: Fructan 1-exohydrolase (602 aa).

A signal peptide spans 1–19; the sequence is MAQAWAFLLLPVLLLSSYA. The active site involves aspartate 81. Residues asparagine 174, asparagine 242, and asparagine 254 are each glycosylated (N-linked (GlcNAc...) asparagine). Cysteine 452 and cysteine 498 form a disulfide bridge.

Belongs to the glycosyl hydrolase 32 family. As to expression, detected in leaves, with maximum levels at the leaf tip.

The enzyme catalyses Hydrolysis of terminal, non-reducing (2-&gt;1)-linked beta-D-fructofuranose residues in fructans.. With respect to regulation, inhibited by sucrose. In terms of biological role, hydrolyzes inulin-type beta-(2,1)-fructans. Has low activity against beta-(2,6)-linked fructans. May play a role as a beta-(2,1)-trimmer during graminan biosynthesis. This chain is Fructan 1-exohydrolase, found in Bromus pictus (Patagonian grass).